Consider the following 342-residue polypeptide: Cell division protein ZipA (342 aa).

Topologically, residues 1-6 (MEDLQL) are periplasmic. A helical transmembrane segment spans residues 7–27 (VLFILGAIAIVAVLVHGFWSI). Residues 28-342 (RRQQPKSLKD…DYLHRIRANA (315 aa)) are Cytoplasmic-facing. Residues 33–57 (KSLKDSPMGNFYKQQADKESPPKRV) are disordered. Residues 47 to 57 (QADKESPPKRV) are compositionally biased toward basic and acidic residues.

The protein belongs to the ZipA family. In terms of assembly, interacts with FtsZ via their C-terminal domains.

The protein resides in the cell inner membrane. Functionally, essential cell division protein that stabilizes the FtsZ protofilaments by cross-linking them and that serves as a cytoplasmic membrane anchor for the Z ring. Also required for the recruitment to the septal ring of downstream cell division proteins. This chain is Cell division protein ZipA, found in Shewanella sp. (strain W3-18-1).